Reading from the N-terminus, the 559-residue chain is 2-isopropylmalate synthase (559 aa).

The 275-residue stretch at 33 to 307 (PIWCSSDLRD…NPDLDFSDID (275 aa)) folds into the Pyruvate carboxyltransferase domain. The Mg(2+) site is built by Asp42, His246, His248, and Asn282. Positions 439-559 (ANTPYALVSH…SLSQPEAKAA (121 aa)) are regulatory domain.

It belongs to the alpha-IPM synthase/homocitrate synthase family. LeuA type 2 subfamily. As to quaternary structure, homodimer. The cofactor is Mg(2+).

It is found in the cytoplasm. It catalyses the reaction 3-methyl-2-oxobutanoate + acetyl-CoA + H2O = (2S)-2-isopropylmalate + CoA + H(+). The protein operates within amino-acid biosynthesis; L-leucine biosynthesis; L-leucine from 3-methyl-2-oxobutanoate: step 1/4. Functionally, catalyzes the condensation of the acetyl group of acetyl-CoA with 3-methyl-2-oxobutanoate (2-ketoisovalerate) to form 3-carboxy-3-hydroxy-4-methylpentanoate (2-isopropylmalate). This is 2-isopropylmalate synthase from Pseudomonas fluorescens (strain Pf0-1).